A 431-amino-acid polypeptide reads, in one-letter code: 3-phosphoshikimate 1-carboxyvinyltransferase (431 aa).

Residues K26, S27, and R31 each coordinate 3-phosphoshikimate. K26 contacts phosphoenolpyruvate. The phosphoenolpyruvate site is built by G99 and R127. Positions 170, 171, 172, 199, 314, and 343 each coordinate 3-phosphoshikimate. Q172 lines the phosphoenolpyruvate pocket. E314 (proton acceptor) is an active-site residue. Phosphoenolpyruvate is bound by residues R347, R388, and K413.

Belongs to the EPSP synthase family. Monomer.

It localises to the cytoplasm. It catalyses the reaction 3-phosphoshikimate + phosphoenolpyruvate = 5-O-(1-carboxyvinyl)-3-phosphoshikimate + phosphate. The protein operates within metabolic intermediate biosynthesis; chorismate biosynthesis; chorismate from D-erythrose 4-phosphate and phosphoenolpyruvate: step 6/7. Functionally, catalyzes the transfer of the enolpyruvyl moiety of phosphoenolpyruvate (PEP) to the 5-hydroxyl of shikimate-3-phosphate (S3P) to produce enolpyruvyl shikimate-3-phosphate and inorganic phosphate. This is 3-phosphoshikimate 1-carboxyvinyltransferase from Mycobacterium marinum (strain ATCC BAA-535 / M).